A 218-amino-acid chain; its full sequence is Monomethylamine corrinoid protein 2 (218 aa).

In terms of domain architecture, B12-binding N-terminal spans 1–91; that stretch reads MTNTEIFNKL…ELEKTKVEGE (91 aa). One can recognise a B12-binding domain in the interval 94–218; that stretch reads TGLAITFVAE…AAKVALNVMK (125 aa). Methylcob(III)alamin is bound at residue His-107.

This sequence belongs to the methylamine corrinoid protein family. In terms of assembly, can form a complex with MtmB.

The protein operates within one-carbon metabolism; methanogenesis from methylamine. Its function is as follows. Acts as a methyl group carrier between MtmB and MtbA. The protein is Monomethylamine corrinoid protein 2 (mtmC2) of Methanosarcina mazei (strain ATCC BAA-159 / DSM 3647 / Goe1 / Go1 / JCM 11833 / OCM 88) (Methanosarcina frisia).